The primary structure comprises 445 residues: DNA repair protein RadA (445 aa).

The segment at 10-27 adopts a C4-type zinc-finger fold; sequence CSNCANISNKWSGQCFDC. 90–97 contributes to the ATP binding site; sequence GEPGIGKS. Residues 249–253 carry the RadA KNRFG motif motif; sequence KNRFG. The interval 348–445 is lon-protease-like; that stretch reads EIYLSIAGGL…HLQELKEIIK (98 aa).

Belongs to the RecA family. RadA subfamily.

In terms of biological role, DNA-dependent ATPase involved in processing of recombination intermediates, plays a role in repairing DNA breaks. Stimulates the branch migration of RecA-mediated strand transfer reactions, allowing the 3' invading strand to extend heteroduplex DNA faster. Binds ssDNA in the presence of ADP but not other nucleotides, has ATPase activity that is stimulated by ssDNA and various branched DNA structures, but inhibited by SSB. Does not have RecA's homology-searching function. The chain is DNA repair protein RadA from Rickettsia prowazekii (strain Madrid E).